A 155-amino-acid chain; its full sequence is Ribosomal RNA large subunit methyltransferase H (155 aa).

S-adenosyl-L-methionine is bound by residues Leu-72, Gly-104, and 123–128 (LSKMTF).

The protein belongs to the RNA methyltransferase RlmH family. As to quaternary structure, homodimer.

It is found in the cytoplasm. The catalysed reaction is pseudouridine(1915) in 23S rRNA + S-adenosyl-L-methionine = N(3)-methylpseudouridine(1915) in 23S rRNA + S-adenosyl-L-homocysteine + H(+). In terms of biological role, specifically methylates the pseudouridine at position 1915 (m3Psi1915) in 23S rRNA. The sequence is that of Ribosomal RNA large subunit methyltransferase H from Cytophaga hutchinsonii (strain ATCC 33406 / DSM 1761 / CIP 103989 / NBRC 15051 / NCIMB 9469 / D465).